Consider the following 235-residue polypeptide: Large ribosomal subunit protein uL1 (235 aa).

The protein belongs to the universal ribosomal protein uL1 family. In terms of assembly, part of the 50S ribosomal subunit.

Functionally, binds directly to 23S rRNA. The L1 stalk is quite mobile in the ribosome, and is involved in E site tRNA release. In terms of biological role, protein L1 is also a translational repressor protein, it controls the translation of the L11 operon by binding to its mRNA. The chain is Large ribosomal subunit protein uL1 from Mycobacterium bovis (strain ATCC BAA-935 / AF2122/97).